Reading from the N-terminus, the 352-residue chain is 4-hydroxy-2-oxovalerate aldolase (352 aa).

Positions Val13–Ala265 constitute a Pyruvate carboxyltransferase domain. Residue Arg21–Asp22 participates in substrate binding. Asp22 contacts Mn(2+). The active-site Proton acceptor is the His25. Substrate-binding residues include Ser175 and His204. The Mn(2+) site is built by His204 and His206. A substrate-binding site is contributed by Tyr295.

It belongs to the 4-hydroxy-2-oxovalerate aldolase family.

It carries out the reaction (S)-4-hydroxy-2-oxopentanoate = acetaldehyde + pyruvate. This is 4-hydroxy-2-oxovalerate aldolase from Mycobacterium avium (strain 104).